We begin with the raw amino-acid sequence, 545 residues long: Cytochrome bc1 complex cytochrome b subunit (545 aa).

The chain crosses the membrane as a helical span at residues 54 to 74 (VCLYSFIIIILTGVYLTLFFH). Heme contacts are provided by H118 and H132. Transmembrane regions (helical) follow at residues 122–142 (ALIF…TGAF), 150–170 (WLFG…GYSL), and 182–202 (FMEG…FFLF). Positions 219 and 234 each coordinate heme. 5 helical membrane-spanning segments follow: residues 220–240 (ILLL…LVFY), 269–289 (AGGF…IATI), 335–355 (LVLG…AIAV), 385–405 (FGVA…NDLW), and 413–433 (INAI…VAFI).

This sequence belongs to the cytochrome b family. The cytochrome bc1 complex is composed of a cytochrome b (QcrB), the Rieske iron-sulfur protein (QcrA) and a diheme cytochrome c (QcrC) subunit. Heme serves as cofactor.

The protein localises to the cell membrane. The enzyme catalyses a quinol + 2 Fe(III)-[cytochrome c](out) = a quinone + 2 Fe(II)-[cytochrome c](out) + 2 H(+)(out). Functionally, cytochrome b subunit of the cytochrome bc1 complex, an essential component of the respiratory electron transport chain required for ATP synthesis. The bc1 complex catalyzes the oxidation of ubiquinol and the reduction of cytochrome c in the respiratory chain. The bc1 complex operates through a Q-cycle mechanism that couples electron transfer to generation of the proton gradient that drives ATP synthesis. The cytochrome b subunit contains two ubiquinol reactive sites: the oxidation (QP) site and the reduction (QN) site. This is Cytochrome bc1 complex cytochrome b subunit (qcrB) from Streptomyces coelicolor (strain ATCC BAA-471 / A3(2) / M145).